A 91-amino-acid polypeptide reads, in one-letter code: LYR motif-containing protein 4 (91 aa).

Residues Arg6 and Lys44 each coordinate pantetheine 4'-phosphate. Lys47 is subject to N6-succinyllysine.

It belongs to the complex I LYR family. In terms of assembly, homodimer. Component of the mitochondrial core iron-sulfur cluster (ISC) complex composed of NFS1, LYRM4, NDUFAB1, ISCU, FXN, and FDX2; this complex is a heterohexamer containing two copies of each monomer. Component of the cyteine desulfurase complex composed of NFS1, LYRM4 and NDUFAB1; this complex contributes to the stability and cysteine desulfurase activity of NFS1. Interacts with FXN; this interaction is nickel-dependent. Interacts with the cytoplasmic form of NFS1; the complex increases the stability of NFS1. Forms a complex with the cytoplasmic form of NFS1; this complex increases the stability and cysteine desulfurase activity of NFS1. Interacts with NFS1. Component of a complex composed of FXN, NFS1, LYRM4 and ISCU.

The protein resides in the mitochondrion. It is found in the nucleus. Its pathway is cofactor biosynthesis; iron-sulfur cluster biosynthesis. Stabilizing factor, of the core iron-sulfur cluster (ISC) assembly complex, that regulates, in association with NDUFAB1, the stability and the cysteine desulfurase activity of NFS1 and participates in the [2Fe-2S] clusters assembly on the scaffolding protein ISCU. The core iron-sulfur cluster (ISC) assembly complex is involved in the de novo synthesis of a [2Fe-2S] cluster, the first step of the mitochondrial iron-sulfur protein biogenesis. This process is initiated by the cysteine desulfurase complex (NFS1:LYRM4:NDUFAB1) that produces persulfide which is delivered on the scaffold protein ISCU in a FXN-dependent manner. Then this complex is stabilized by FDX2 which provides reducing equivalents to accomplish the [2Fe-2S] cluster assembly. Finally, the [2Fe-2S] cluster is transferred from ISCU to chaperone proteins, including HSCB, HSPA9 and GLRX5. May also participates in the iron-sulfur protein biogenesis in the cytoplasm through its interaction with the cytoplasmic form of NFS1. This is LYR motif-containing protein 4 from Mus musculus (Mouse).